Here is a 424-residue protein sequence, read N- to C-terminus: GTPase Obg (424 aa).

Residues 1-158 (MFYDQAKIYV…RNLLLELKLL (158 aa)) form the Obg domain. Residues 159-329 (ADVGLVGFPN…LVYAAAKALP (171 aa)) enclose the OBG-type G domain. GTP is bound by residues 165–172 (GFPNVGKS), 190–194 (FTTLV), 212–215 (DIPG), 282–285 (NKMD), and 310–312 (SAA). Residues Ser-172 and Thr-192 each contribute to the Mg(2+) site. The OCT domain maps to 347 to 424 (TQASAPHRFE…IAGIEFEWEE (78 aa)).

Belongs to the TRAFAC class OBG-HflX-like GTPase superfamily. OBG GTPase family. As to quaternary structure, monomer. The cofactor is Mg(2+).

The protein localises to the cytoplasm. In terms of biological role, an essential GTPase which binds GTP, GDP and possibly (p)ppGpp with moderate affinity, with high nucleotide exchange rates and a fairly low GTP hydrolysis rate. Plays a role in control of the cell cycle, stress response, ribosome biogenesis and in those bacteria that undergo differentiation, in morphogenesis control. The chain is GTPase Obg from Desulfitobacterium hafniense (strain DSM 10664 / DCB-2).